Consider the following 99-residue polypeptide: MSSFFGSGAGSPSNDMTARKEQMKQSIQQELAIANAQQLINKINENCFAKCVTKPSTSLSSSQESCLSQCMTLYMAAFDQVSRSYVARISKERGVAPGL.

The span at 1–13 (MSSFFGSGAGSPS) shows a compositional bias: low complexity. The tract at residues 1 to 24 (MSSFFGSGAGSPSNDMTARKEQMK) is disordered. A Twin CX3C motif motif is present at residues 47–70 (CFAKCVTKPSTSLSSSQESCLSQC). Cystine bridges form between C47–C70 and C51–C66.

The protein belongs to the small Tim family. Heterohexamer; composed of 3 copies of TIM8 and 3 copies of TIM13, named soluble 70 kDa complex. Associates with the TIM22 complex, whose core is composed of TIM22 and TIM54. Interacts with the transmembrane regions of multi-pass transmembrane proteins in transit.

It is found in the mitochondrion inner membrane. In terms of biological role, mitochondrial intermembrane chaperone that participates in the import and insertion of some multi-pass transmembrane proteins into the mitochondrial inner membrane. Also required for the transfer of beta-barrel precursors from the TOM complex to the sorting and assembly machinery (SAM complex) of the outer membrane. Acts as a chaperone-like protein that protects the hydrophobic precursors from aggregation and guide them through the mitochondrial intermembrane space. The TIM8-TIM13 complex is non essential and only mediates the import of few proteins, while the predominant TIM9-TIM10 70 kDa complex is crucial and mediates the import of much more proteins. The polypeptide is Mitochondrial import inner membrane translocase subunit TIM13 (TIM13) (Cryptococcus neoformans var. neoformans serotype D (strain B-3501A) (Filobasidiella neoformans)).